The following is a 559-amino-acid chain: Putative helicase 22 (559 aa).

The Helicase ATP-binding domain maps to 186–347 (VSDVNVIGNG…EIMGLLGKIS (162 aa)). 199–206 (APTGSGKS) serves as a coordination point for ATP. The short motif at 300–303 (DEAH) is the DEAH box element. The region spanning 410–552 (TNKQIISKIK…KMNFIENEYN (143 aa)) is the Helicase C-terminal domain.

The chain is Putative helicase 22 (SIFV0022) from Sulfolobus islandicus filamentous virus (isolate Iceland/Hveragerdi) (SIFV).